The sequence spans 346 residues: D-alanine--D-alanine ligase (346 aa).

The 195-residue stretch at K133–K327 folds into the ATP-grasp domain. L159 to Y211 is a binding site for ATP. Residues D284, E296, and N298 each coordinate Mg(2+).

The protein belongs to the D-alanine--D-alanine ligase family. Mg(2+) serves as cofactor. Mn(2+) is required as a cofactor.

It localises to the cytoplasm. It catalyses the reaction 2 D-alanine + ATP = D-alanyl-D-alanine + ADP + phosphate + H(+). It participates in cell wall biogenesis; peptidoglycan biosynthesis. Its function is as follows. Cell wall formation. This chain is D-alanine--D-alanine ligase, found in Campylobacter jejuni subsp. jejuni serotype O:6 (strain 81116 / NCTC 11828).